Here is a 285-residue protein sequence, read N- to C-terminus: Nucleotide-binding protein Glov_2163 (285 aa).

8–15 (GMSGSGKS) contacts ATP. GTP is bound at residue 59 to 62 (DIRG).

Belongs to the RapZ-like family.

Its function is as follows. Displays ATPase and GTPase activities. The protein is Nucleotide-binding protein Glov_2163 of Trichlorobacter lovleyi (strain ATCC BAA-1151 / DSM 17278 / SZ) (Geobacter lovleyi).